The following is a 397-amino-acid chain: 3-hydroxy-3-methylglutaryl-coenzyme A reductase (397 aa).

Active-site charge relay system residues include E96 and D301. H391 functions as the Proton donor in the catalytic mechanism.

It belongs to the HMG-CoA reductase family.

It catalyses the reaction (R)-mevalonate + 2 NADP(+) + CoA = (3S)-3-hydroxy-3-methylglutaryl-CoA + 2 NADPH + 2 H(+). The protein operates within metabolic intermediate biosynthesis; (R)-mevalonate biosynthesis; (R)-mevalonate from acetyl-CoA: step 3/3. Functionally, converts HMG-CoA to mevalonate. The chain is 3-hydroxy-3-methylglutaryl-coenzyme A reductase (hmgA) from Methanothermobacter thermautotrophicus (strain ATCC 29096 / DSM 1053 / JCM 10044 / NBRC 100330 / Delta H) (Methanobacterium thermoautotrophicum).